We begin with the raw amino-acid sequence, 430 residues long: MFIDTAKVFVKSGNGGNGAISFRREKYVPLGGPDGGDGGKGGSIIFQVETGITTLLDFKYKKKFIAESGENGGGSKCYGKDGESLYIKVPMGTIIREAETNKIIADLSHKGQELVLLRGGKGGKGNVKFATATKQAPHYAEPGMPGDELNIVLELKLLADVGLLGFPNVGKSTLLSMTTKAKPKIANYHFTTLKPNLGVVAVDGIDPFVMADIPGIIEGAAEGVGLGIQFLRHIERTRLLIHIVDISGVEGRDPFEDFIKINEELKKYSVKLWDRPQIVVANKSDMLYDEGIFEDFKKKVQEMGFDKVFKMSAATNEGVDAVMKEAARILKDIPVKELEISEDEMYIPEEKRFTYDITVEHNKEEGYDVYIVEGTFVDRLLSAVNVNDADSLRYFHKVLRNKGIFDELREMGVKDGDMVRLNDFEFEYIL.

The 158-residue stretch at 1 to 158 folds into the Obg domain; it reads MFIDTAKVFV…LNIVLELKLL (158 aa). Positions 159-331 constitute an OBG-type G domain; it reads ADVGLLGFPN…VMKEAARILK (173 aa). GTP contacts are provided by residues 165 to 172, 190 to 194, 212 to 215, 282 to 285, and 312 to 314; these read GFPNVGKS, FTTLK, DIPG, NKSD, and SAA. Residues Ser172 and Thr192 each contribute to the Mg(2+) site. Positions 345-430 constitute an OCT domain; sequence MYIPEEKRFT…LNDFEFEYIL (86 aa).

Belongs to the TRAFAC class OBG-HflX-like GTPase superfamily. OBG GTPase family. In terms of assembly, monomer. It depends on Mg(2+) as a cofactor.

It is found in the cytoplasm. In terms of biological role, an essential GTPase which binds GTP, GDP and possibly (p)ppGpp with moderate affinity, with high nucleotide exchange rates and a fairly low GTP hydrolysis rate. Plays a role in control of the cell cycle, stress response, ribosome biogenesis and in those bacteria that undergo differentiation, in morphogenesis control. This Clostridium beijerinckii (strain ATCC 51743 / NCIMB 8052) (Clostridium acetobutylicum) protein is GTPase Obg.